A 246-amino-acid polypeptide reads, in one-letter code: DNA repair protein RecO (246 aa).

It belongs to the RecO family.

Involved in DNA repair and RecF pathway recombination. The chain is DNA repair protein RecO from Pelobacter propionicus (strain DSM 2379 / NBRC 103807 / OttBd1).